A 195-amino-acid polypeptide reads, in one-letter code: UPF0314 protein RL4541 (195 aa).

4 helical membrane passes run 15 to 35 (FWFV…YMMG), 64 to 84 (WYTP…HLIL), 127 to 147 (GDSI…FFFA), and 150 to 170 (APVA…GYII).

Belongs to the UPF0314 family.

The protein resides in the cell membrane. This Rhizobium johnstonii (strain DSM 114642 / LMG 32736 / 3841) (Rhizobium leguminosarum bv. viciae) protein is UPF0314 protein RL4541.